The primary structure comprises 779 residues: Putative helicase V13 (779 aa).

Residues 477–642 (DNPKPFITSL…FVKEEELNEK (166 aa)) enclose the SF3 helicase domain. An ATP-binding site is contributed by 504–511 (GKSNAGKS).

The polypeptide is Putative helicase V13 (Acanthamoeba polyphaga (Amoeba)).